The chain runs to 859 residues: MQEQYNPSEIEALVQKHWHDTKTFEVTEDQNKEKFYCLSMFPYPSGRLHMGHVRNYTIGDVVARFQRLQGKNVLQPIGWDSFGLPAENAAINNKTAPAPWTYQNIEYMKNQLKLLGFGYDWSREIATCTPEYYRWEQWFFTKLYEKGLVYKKTASVNWCPNDETVLANEQVQDGCCWRCDTPVEQKEIPQWFIKITAYAEELLNDIDTLDGWPEQVKTMQRNWIGRSEGVEMTFGVAGSDKSFDIYTTRPDTLMGVTYVAIAAGHPLAEIAAQTNPELAAFIDECKNSTTSEAELATMEKRGVATGLYAIHPITGKQVPIWAANFVLMNYGTGAVMSVPGHDQRDYEFAKKYHLPIEAVIKPAEGDLDISEAAYTEKGILFNSGEFDGLDFDGAFNVIANKLVAEGKGKRQVNYRLRDWGVSRQRYWGAPIPMVTLADGTVIPTPEDQLPVILPEDVVMDGIQSPIKADKEWAKTQVNGQDALRETDTFDTFMESSWYYARYCSPQAEQMLDPTKANYWLPVDQYIGGIEHACMHLLYFRFFHKLLRDAGLVNTNEPAKQLLTQGMVLADAFYYTNDKGARVWVSPLDVATTEKDDKGRITKAIDKDGNELVYTGMCKMSKSKNNGIDPQVMVEKYGADTVRLFMMFASPPELTLEWQESGVEGAHRFIKRLWKLASEYVAQDNSEALDVSKLTSEQKALRREVHKTIAKVTDDIGRRQMFNTAVAAVMELMNHLQKAPQTTGQDRAIIGEALSAVVRLLYPIIPHVSFTLWNELGNTNSIEDSQWPVVDESALVEDSKLIVVQVNGKVRAKITVAADADQASVEALGMADEQVIKYLDGVTVRKVIYVPGKLLSIVAN.

Positions 42–52 match the 'HIGH' region motif; sequence PYPSGRLHMGH. Positions 618-622 match the 'KMSKS' region motif; it reads KMSKS. Lys621 provides a ligand contact to ATP.

This sequence belongs to the class-I aminoacyl-tRNA synthetase family.

It localises to the cytoplasm. The enzyme catalyses tRNA(Leu) + L-leucine + ATP = L-leucyl-tRNA(Leu) + AMP + diphosphate. In Shewanella oneidensis (strain ATCC 700550 / JCM 31522 / CIP 106686 / LMG 19005 / NCIMB 14063 / MR-1), this protein is Leucine--tRNA ligase.